The chain runs to 216 residues: Pyrophosphatase PpaX (216 aa).

D9 serves as the catalytic Nucleophile.

The protein belongs to the HAD-like hydrolase superfamily. PpaX family. It depends on Mg(2+) as a cofactor.

It carries out the reaction diphosphate + H2O = 2 phosphate + H(+). In terms of biological role, hydrolyzes pyrophosphate formed during P-Ser-HPr dephosphorylation by HPrK/P. Might play a role in controlling the intracellular pyrophosphate pool. The sequence is that of Pyrophosphatase PpaX from Bacillus cereus (strain Q1).